We begin with the raw amino-acid sequence, 519 residues long: Ion-translocating oxidoreductase complex subunit C (519 aa).

4Fe-4S ferredoxin-type domains lie at 372–401 (ETPEAKTMPCIRCGRCVQGCPVGLTPFELN) and 411–440 (GAAKVGLMDCLACGCCSYNCPANLPLVQSF). [4Fe-4S] cluster is bound by residues Cys381, Cys384, Cys387, Cys391, Cys420, Cys423, Cys426, and Cys430. Residues 494–519 (KAEEAAAAAAMPPPATATAIQGEATP) are disordered.

It belongs to the 4Fe4S bacterial-type ferredoxin family. RnfC subfamily. As to quaternary structure, the complex is composed of six subunits: RnfA, RnfB, RnfC, RnfD, RnfE and RnfG. Requires [4Fe-4S] cluster as cofactor.

The protein localises to the cellular chromatophore membrane. In terms of biological role, part of a membrane-bound complex that couples electron transfer with translocation of ions across the membrane. Required for nitrogen fixation. Involved in electron transfer to nitrogenase. The polypeptide is Ion-translocating oxidoreductase complex subunit C (Rhodobacter capsulatus (Rhodopseudomonas capsulata)).